A 336-amino-acid polypeptide reads, in one-letter code: Cell division protein ZipA (336 aa).

Residues 1-2 (ME) are Periplasmic-facing. The helical transmembrane segment at 3-23 (LHILFFILAGLLIAVLIGFSL) threads the bilayer. Residues 24 to 336 (WSARREKSRI…SRQAYLARVS (313 aa)) lie on the Cytoplasmic side of the membrane.

It belongs to the ZipA family. Interacts with FtsZ via their C-terminal domains.

The protein resides in the cell inner membrane. In terms of biological role, essential cell division protein that stabilizes the FtsZ protofilaments by cross-linking them and that serves as a cytoplasmic membrane anchor for the Z ring. Also required for the recruitment to the septal ring of downstream cell division proteins. In Actinobacillus pleuropneumoniae serotype 5b (strain L20), this protein is Cell division protein ZipA.